A 478-amino-acid chain; its full sequence is F-box protein YDR306C (478 aa).

Residues 1-14 show a composition bias toward basic residues; it reads MANKSRPKKIKAPY. Disordered stretches follow at residues 1-32 and 67-101; these read MANK…DNKA and RLSN…VIES. The span at 80 to 90 shows a compositional bias: low complexity; the sequence is QSPSSSSTSSS. Over residues 91–101 the composition is skewed to basic and acidic residues; that stretch reads KGEKNGKVIES. The 62-residue stretch at 112–173 folds into the F-box domain; that stretch reads KMVLPWEIQH…CLPKLYYAPA (62 aa).

As to quaternary structure, interacts with SKP1. Component of the probable SCF(YDR306C) complex containing CDC53, SKP1, RBX1 and YDR306C. In terms of processing, autoubiquitinated by the E3 ubiquitin ligase complex in conjunction with the E2 enzyme CDC34.

Its pathway is protein modification; protein ubiquitination. Its function is as follows. Substrate recognition component of a SCF (SKP1-CUL1-F-box protein) E3 ubiquitin-protein ligase complex which mediates the ubiquitination and subsequent proteasomal degradation of target proteins. Probably recognizes and binds to phosphorylated target proteins. The sequence is that of F-box protein YDR306C from Saccharomyces cerevisiae (strain ATCC 204508 / S288c) (Baker's yeast).